Consider the following 343-residue polypeptide: uncharacterized protein (343 aa).

This is an uncharacterized protein from Acanthamoeba polyphaga mimivirus (APMV).